The sequence spans 900 residues: MSHLKTSTEDEEPTEEYENVGNAASKWPKVEDPMPESKVGDTCVWDSKVENQQKKPVENRMKEDKSSIREAISKAKSTANIKTEQEGEASEKSLHLSPQHITHQTMPIGQRGSEQGKRVENINGTSYPSLQQKTNAVKKLHKCDECGKSFKYNSRLVQHKIMHTGEKRYECDDCGGTFRSSSSLRVHKRIHTGEKPYKCEECGKAYMSYSSLINHKSTHSGEKNCKCDECGKSFNYSSVLDQHKRIHTGEKPYECGECGKAFRNSSGLRVHKRIHTGEKPYECDICGKTFSNSSGLRVHKRIHTGEKPYECDECGKAFITCRTLLNHKSIHFGDKPYKCDECEKSFNYSSLLIQHKVIHTGEKPYECDECGKAFRNSSGLIVHKRIHTGEKPYKCDVCGKAFSYSSGLAVHKSIHPGKKAHECKECGKSFSYNSLLLQHRTIHTGERPYVCDVCGKTFRNNAGLKVHRRLHTGEKPYKCDVCGKAYISRSSLKNHKGIHLGEKPYKCSYCEKSFNYSSALEQHKRIHTREKPFGCDECGKAFRNNSGLKVHKRIHTGERPYKCEECGKAYISLSSLINHKSVHPGEKPFKCDECEKAFITYRTLTNHKKVHLGEKPYKCDVCEKSFNYTSLLSQHRRVHTREKPYECDRCEKVFRNNSSLKVHKRIHTGERPYECDVCGKAYISHSSLINHKSTHPGRTPHTCDECGKAFFSSRTLISHKRVHLGEKPFKCVECGKSFSYSSLLSQHKRIHTGEKPYVCDRCGKAFRNSSGLTVHKRIHTGEKPYECDECGKAYISHSSLINHKSVHQGKQPYNCECGKSFNYRSVLDQHKRIHTGKKPYRCNECGKAFNIRSNLTKHKRTHTGEESLNVIYVGSYSGTSQKRTYEGGNALDGGRMRMPL.

The disordered stretch occupies residues 1-97 (MSHLKTSTED…EASEKSLHLS (97 aa)). Residue Lys5 forms a Glycyl lysine isopeptide (Lys-Gly) (interchain with G-Cter in SUMO2) linkage. Residues 9–18 (EDEEPTEEYE) show a composition bias toward acidic residues. The segment covering 47-73 (SKVENQQKKPVENRMKEDKSSIREAIS) has biased composition (basic and acidic residues). Glycyl lysine isopeptide (Lys-Gly) (interchain with G-Cter in SUMO2) cross-links involve residues Lys48, Lys62, Lys65, Lys82, and Lys92. Residues 83–94 (TEQEGEASEKSL) show a composition bias toward basic and acidic residues. 13 consecutive C2H2-type zinc fingers follow at residues 225–247 (CKCD…KRIH), 253–275 (YECG…KRIH), 281–303 (YECD…KRIH), 309–331 (YECD…KSIH), 337–359 (YKCD…KVIH), 365–387 (YECD…KRIH), 393–415 (YKCD…KSIH), 421–443 (HECK…RTIH), 449–471 (YVCD…RRLH), 477–499 (YKCD…KGIH), 505–527 (YKCS…KRIH), 533–555 (FGCD…KRIH), and 561–583 (YKCE…KSVH). A Glycyl lysine isopeptide (Lys-Gly) (interchain with G-Cter in SUMO2) cross-link involves residue Lys587. C2H2-type zinc fingers lie at residues 589-611 (FKCD…KKVH), 617-639 (YKCD…RRVH), 645-667 (YECD…KRIH), 673-695 (YECD…KSTH), 701-723 (HTCD…KRVH), 729-751 (FKCV…KRIH), 757-779 (YVCD…KRIH), 785-807 (YECD…KSVH), 813-834 (YNCE…KRIH), and 840-862 (YRCN…KRTH). Residue Lys748 forms a Glycyl lysine isopeptide (Lys-Gly) (interchain with G-Cter in SUMO2) linkage. A Glycyl lysine isopeptide (Lys-Gly) (interchain with G-Cter in SUMO2) cross-link involves residue Lys882.

It belongs to the krueppel C2H2-type zinc-finger protein family.

It is found in the nucleus. In terms of biological role, may play a role in differentiating skeletal muscle. The chain is Zinc finger protein 62 homolog (ZFP62) from Homo sapiens (Human).